Reading from the N-terminus, the 156-residue chain is ATP synthase subunit b (156 aa).

A helical membrane pass occupies residues 7-27 (LIGQAIWFALFVFFCMKFVWP).

The protein belongs to the ATPase B chain family. In terms of assembly, F-type ATPases have 2 components, F(1) - the catalytic core - and F(0) - the membrane proton channel. F(1) has five subunits: alpha(3), beta(3), gamma(1), delta(1), epsilon(1). F(0) has three main subunits: a(1), b(2) and c(10-14). The alpha and beta chains form an alternating ring which encloses part of the gamma chain. F(1) is attached to F(0) by a central stalk formed by the gamma and epsilon chains, while a peripheral stalk is formed by the delta and b chains.

The protein localises to the cell inner membrane. F(1)F(0) ATP synthase produces ATP from ADP in the presence of a proton or sodium gradient. F-type ATPases consist of two structural domains, F(1) containing the extramembraneous catalytic core and F(0) containing the membrane proton channel, linked together by a central stalk and a peripheral stalk. During catalysis, ATP synthesis in the catalytic domain of F(1) is coupled via a rotary mechanism of the central stalk subunits to proton translocation. Functionally, component of the F(0) channel, it forms part of the peripheral stalk, linking F(1) to F(0). The sequence is that of ATP synthase subunit b from Alcanivorax borkumensis (strain ATCC 700651 / DSM 11573 / NCIMB 13689 / SK2).